Reading from the N-terminus, the 612-residue chain is MDAQDIESRHPLIGARPRRRALRSLSILLAAALLLGLVLFYANGTGSGTAVDPVRVDNEFPWTNDMLAWQRCGFHFRTVRNYMNDPSGPMYYKGWYHLFYQHNKDFAYWGNITWGHAVSRDLINWQHLPVAVGPDHWYDISGVWTGSIIVVSEDRVVMLFTGGTKSFDQSINLAEAADPSDPLLLKWIKYDNNPILWPPPGIVRDDFRDPNPIWYNASESTYHIVVGSKNDSLQHTGIALVYLTKDFKKFDLLPTVLHSVDKVGMWECVEVYPVATTGPLLHKAIDNFDVDRVLDRSTVKHVLKASMNDEWHDYYAIGTFDPIGNKWTPDDETVDVGIGLRYDWGKFYASRTFFDPLKQRRIIWGYIGEVDSQKADIAKGWASLQGIPRSVLYDVKTGTNVLTWPIEEMEGLRMARKDFSGIKIKKGSTVELSDFGDAFQIDIEAEFTISKEALEATIEADVGYNCSSSGGAAIRGTLGPFGLLVLANQDLTENTATYFYVSKGIDGSLITHFCQDETRSSKANDIVKRVVGGTVPVLDGETFAVRILVDHSVIESFAMGGRTSATSRAYPTEAINSAARVFLFNNATGVDVIAESVKIWQMNSTYNDFYHF.

At 1-24 (MDAQDIESRHPLIGARPRRRALRS) the chain is on the cytoplasmic side. Residues 25–45 (LSILLAAALLLGLVLFYANGT) form a helical; Signal-anchor for type II membrane protein membrane-spanning segment. The Vacuolar segment spans residues 46 to 612 (GSGTAVDPVR…NSTYNDFYHF (567 aa)). Substrate is bound by residues 82–85 (YMND), Q101, and W109. D85 is a catalytic residue. N111 carries an N-linked (GlcNAc...) asparagine glycan. Residues 144-145 (WT) and 208-209 (RD) each bind substrate. Residues N216 and N230 are each glycosylated (N-linked (GlcNAc...) asparagine). Position 267 (E267) interacts with substrate. N465 is a glycosylation site (N-linked (GlcNAc...) asparagine). A disulfide bridge connects residues C466 and C514. N586 and N603 each carry an N-linked (GlcNAc...) asparagine glycan.

It belongs to the glycosyl hydrolase 32 family. Might be processed in two N-terminal and C-terminal proteolytic fragments.

It is found in the vacuole membrane. The enzyme catalyses [1-beta-D-fructofuranosyl-(2-&gt;1)-]m+1 alpha-D-glucopyranoside + [1-beta-D-fructofuranosyl-(2-&gt;1)-]n+1 alpha-D-glucopyranoside = [1-beta-D-fructofuranosyl-(2-&gt;1)-]m alpha-D-glucopyranoside + [1-beta-D-fructofuranosyl-(2-&gt;1)-]n+1 beta-D-fructofuranosyl-(2-&gt;6)-alpha-D-glucopyranoside (m &gt; 0, n &gt;= 0).. It carries out the reaction [beta-D-fructosyl-(2-&gt;1)-]m + [beta-D-fructosyl-(2-&gt;1)-]n = [beta-D-fructosyl-(2-&gt;1)-]m-1 + [beta-D-fructosyl-(2-&gt;1)-]n+1.. Functionally, involved in the synthesis of fructan of the inulin neoseries. Catalyzes a self-transfer between identical oligosaccharides of the 1-kestose series. This is Bifunctional 6(G)-fructosyltransferase/2,1-fructan:2,1-fructan 1-fructosyltransferase from Allium cepa (Onion).